Reading from the N-terminus, the 151-residue chain is Troponin C, isoallergen Bla g 6.0101 (151 aa).

4 consecutive EF-hand domains span residues 7–42 (EQIQLLKKAFDAFDREKKGCISTEMVGTILEMLGHR), 43–78 (LDDDMLQEIIAEVDADGSGELEFEEFVSLASRFLVE), 83–118 (AMQQELREAFRLYDKEGNGYITTNVLREILKELDDK), and 119–151 (ITAEDLDMMIEEIDSDGSGTVDFDEFMEVMTGE). Ca(2+)-binding residues include D56, D58, S60, E62, and E67. Residues D132, D134, S136, T138, and E143 each coordinate Ca(2+).

It belongs to the troponin C family.

Troponin is the central regulatory protein of striated muscle contraction. It consists of three components: Troponin-I (Tn-I) which is the inhibitor of actomyosin ATPase, Troponin-T (Tn-T) which contains the binding site for tropomyosin and Troponin-C (Tn-C). The binding of calcium to Tn-C abolishes the inhibitory action of Tn on actin filaments. This Blattella germanica (German cockroach) protein is Troponin C, isoallergen Bla g 6.0101.